Reading from the N-terminus, the 173-residue chain is Ferric citrate uptake sigma factor FecI (173 aa).

The Polymerase core binding signature appears at 40–52 (DIAQDTFLRVMVS). Positions 139–158 (YSEIAHKLGVSISSVKKYVA) form a DNA-binding region, H-T-H motif.

The protein belongs to the sigma-70 factor family. ECF subfamily. In terms of assembly, interacts with FecR (via cytoplasmic N-terminus).

In terms of biological role, sigma factors are initiation factors that promote the attachment of RNA polymerase to specific initiation sites and are then released. This sigma factor regulates transcriptional activation of the fecABCDE operon which mediates ferric citrate transport. The protein is Ferric citrate uptake sigma factor FecI (fecI) of Escherichia coli (strain K12).